Consider the following 88-residue polypeptide: UPF0213 protein EF_2693 (88 aa).

Positions lysine 5–glutamine 82 constitute a GIY-YIG domain.

This sequence belongs to the UPF0213 family.

The protein is UPF0213 protein EF_2693 of Enterococcus faecalis (strain ATCC 700802 / V583).